Consider the following 217-residue polypeptide: Adenylate kinase (217 aa).

10 to 15 (GIGKGT) contacts ATP. The NMP stretch occupies residues 30 to 59 (ATGDIFRKNFQENTPLGKESKKFINKGLLV). AMP contacts are provided by residues threonine 31, arginine 36, 57–59 (LLV), 85–88 (GFPR), and glutamine 92. The segment at 126–163 (GRRICSHCGKVYHLDNLPPKIEGICDKDQKKLIQREDD) is LID. Arginine 127 provides a ligand contact to ATP. Residues cysteine 130 and cysteine 133 each coordinate Zn(2+). An ATP-binding site is contributed by 136-137 (VY). Residues cysteine 150 and aspartate 153 each contribute to the Zn(2+) site. Residues arginine 160 and arginine 171 each contribute to the AMP site. Glutamine 199 contacts ATP.

This sequence belongs to the adenylate kinase family. Monomer.

The protein localises to the cytoplasm. It catalyses the reaction AMP + ATP = 2 ADP. It participates in purine metabolism; AMP biosynthesis via salvage pathway; AMP from ADP: step 1/1. Functionally, catalyzes the reversible transfer of the terminal phosphate group between ATP and AMP. Plays an important role in cellular energy homeostasis and in adenine nucleotide metabolism. In Phytoplasma australiense, this protein is Adenylate kinase.